Consider the following 270-residue polypeptide: MADEEQMERKEEATEIAPFDPTKKKKKKKVVIQDPADEVDKLAEKTEGLSVTESGEASFVGLKKKKKKLVELDPSLVEAGDGEDTLDDQVGEDEQGEGIVLGGATQYPWEGTDRDYKYDELLGRVFNILRENNPDLAGDRRRTVMRPPQVLREGTKKTVFVNFMDLCKTMHRQPEHVMMFLLAEMGTSGSLDGQQRLVIKGRFAPKNFEAILRRYINEYVICHGCKSPDTILSKENRLFFLRCEQCGSSRSVAPIKAGFVAQVGRRKAGT.

Residues 1 to 38 (MADEEQMERKEEATEIAPFDPTKKKKKKKVVIQDPADE) are disordered.

Belongs to the eIF-2-beta/eIF-5 family. In terms of assembly, eukaryotic translation initiation factor 2 eIF2 is a heterotrimeric complex composed of an alpha, a beta and a gamma subunit.

It localises to the cytoplasm. The protein localises to the cytosol. Functionally, component of the eIF2 complex that functions in the early steps of protein synthesis by forming a ternary complex with GTP and initiator tRNA. This complex binds to a 40S ribosomal subunit, followed by mRNA binding to form a 43S pre-initiation complex (43S PIC). Junction of the 60S ribosomal subunit to form the 80S initiation complex is preceded by hydrolysis of the GTP bound to eIF2 and release of an eIF2-GDP binary complex. In order for eIF2 to recycle and catalyze another round of initiation, the GDP bound to eIF2 must exchange with GTP by way of a reaction catalyzed by eIF2B. The sequence is that of Eukaryotic translation initiation factor 2 subunit beta from Triticum aestivum (Wheat).